The sequence spans 364 residues: MVAVTQTPLDNISVTPDSNDWSAILQQLLKRQSLTVAQATDLMQGWLTDTIPPVLSGAILAAIQAKGVSSEELVGMARVLQSQSSYSPPHSPFPTPLIDTCGTGGDGASTFNISTAVAFVAAAAGVKVAKHGNRSASSKTGSADVLEALGINLNANADKVQAAVSEVGITFLFAPGWHPALKTVATLRKTLKVRTIFNLLGPLVNPLRPTGQIIGVNDPLLIEEIALALSHLGCRKAIALHGRERLDEAGLADVTDLAILQDGKVSCLALNPQELGLNHAPTEVLRGGDVAENAEILKAILQGKGTQAQQDVVALNTALALQVGEAITTTDIVEGCVKGIAIAREVLQSGAAWTKLEQLAEFLR.

Residues Gly-102, 105 to 106 (GD), Thr-110, 112 to 115 (NIST), 130 to 138 (KHGNRSASS), and Ser-142 contribute to the 5-phospho-alpha-D-ribose 1-diphosphate site. An anthranilate-binding site is contributed by Gly-102. A Mg(2+)-binding site is contributed by Ser-114. Asn-133 serves as a coordination point for anthranilate. An anthranilate-binding site is contributed by Arg-188. Mg(2+)-binding residues include Asp-247 and Glu-248.

It belongs to the anthranilate phosphoribosyltransferase family. Homodimer. The cofactor is Mg(2+).

It catalyses the reaction N-(5-phospho-beta-D-ribosyl)anthranilate + diphosphate = 5-phospho-alpha-D-ribose 1-diphosphate + anthranilate. It functions in the pathway amino-acid biosynthesis; L-tryptophan biosynthesis; L-tryptophan from chorismate: step 2/5. Functionally, catalyzes the transfer of the phosphoribosyl group of 5-phosphorylribose-1-pyrophosphate (PRPP) to anthranilate to yield N-(5'-phosphoribosyl)-anthranilate (PRA). The polypeptide is Anthranilate phosphoribosyltransferase 1 (Nostoc sp. (strain PCC 7120 / SAG 25.82 / UTEX 2576)).